Here is a 268-residue protein sequence, read N- to C-terminus: Octanoyltransferase (268 aa).

Positions 73 to 261 constitute a BPL/LPL catalytic domain; the sequence is GEADELVWLL…AFEEVFGPAV (189 aa). Residues 112–119, 192–194, and 205–207 contribute to the substrate site; these read RGGEYTYH, ALG, and GLS. Catalysis depends on Cys223, which acts as the Acyl-thioester intermediate.

It belongs to the LipB family.

It is found in the cytoplasm. It carries out the reaction octanoyl-[ACP] + L-lysyl-[protein] = N(6)-octanoyl-L-lysyl-[protein] + holo-[ACP] + H(+). It participates in protein modification; protein lipoylation via endogenous pathway; protein N(6)-(lipoyl)lysine from octanoyl-[acyl-carrier-protein]: step 1/2. Catalyzes the transfer of endogenously produced octanoic acid from octanoyl-acyl-carrier-protein onto the lipoyl domains of lipoate-dependent enzymes. Lipoyl-ACP can also act as a substrate although octanoyl-ACP is likely to be the physiological substrate. This is Octanoyltransferase from Agrobacterium fabrum (strain C58 / ATCC 33970) (Agrobacterium tumefaciens (strain C58)).